A 421-amino-acid polypeptide reads, in one-letter code: Signal recognition particle receptor FtsY (421 aa).

Over residues 1–10 (MFSFFRRKKK) the composition is skewed to basic residues. Positions 1–31 (MFSFFRRKKKQETPALEEAQIQETAAKAESE) are disordered. Residues 228-235 (GINGAGKT), 309-313 (DTAGR), and 373-376 (TKLD) contribute to the GTP site.

The protein belongs to the GTP-binding SRP family. FtsY subfamily. Part of the signal recognition particle protein translocation system, which is composed of SRP and FtsY. SRP is a ribonucleoprotein composed of Ffh and a 4.5S RNA molecule.

Its subcellular location is the cell inner membrane. The protein localises to the cytoplasm. The enzyme catalyses GTP + H2O = GDP + phosphate + H(+). Involved in targeting and insertion of nascent membrane proteins into the cytoplasmic membrane. Acts as a receptor for the complex formed by the signal recognition particle (SRP) and the ribosome-nascent chain (RNC). Interaction with SRP-RNC leads to the transfer of the RNC complex to the Sec translocase for insertion into the membrane, the hydrolysis of GTP by both Ffh and FtsY, and the dissociation of the SRP-FtsY complex into the individual components. The protein is Signal recognition particle receptor FtsY of Neisseria meningitidis serogroup A / serotype 4A (strain DSM 15465 / Z2491).